The chain runs to 120 residues: UPF0231 protein CKO_03249 (120 aa).

The protein belongs to the UPF0231 family.

In Citrobacter koseri (strain ATCC BAA-895 / CDC 4225-83 / SGSC4696), this protein is UPF0231 protein CKO_03249.